A 323-amino-acid polypeptide reads, in one-letter code: tRNA-dihydrouridine(16) synthase (323 aa).

FMN is bound by residues 7-9 (PME) and Gln-68. Residue Cys-98 is the Proton donor of the active site. Residues Lys-139, 199–201 (NGE), and 223–224 (GR) each bind FMN.

The protein belongs to the Dus family. DusC subfamily. The cofactor is FMN.

The enzyme catalyses 5,6-dihydrouridine(16) in tRNA + NADP(+) = uridine(16) in tRNA + NADPH + H(+). The catalysed reaction is 5,6-dihydrouridine(16) in tRNA + NAD(+) = uridine(16) in tRNA + NADH + H(+). Its function is as follows. Catalyzes the synthesis of 5,6-dihydrouridine (D), a modified base found in the D-loop of most tRNAs, via the reduction of the C5-C6 double bond in target uridines. Specifically modifies U16 in tRNAs. This chain is tRNA-dihydrouridine(16) synthase, found in Pseudomonas putida (strain ATCC 47054 / DSM 6125 / CFBP 8728 / NCIMB 11950 / KT2440).